The sequence spans 537 residues: Biotin carboxylase, chloroplastic (537 aa).

The transit peptide at 1–71 (MDASMITNSK…ATSGGLGVTC (71 aa)) directs the protein to the chloroplast. ATP-binding positions include K188, K230, 236–237 (GG), 272–275 (EKFV), and H280. An ATP-grasp domain is found at 192-389 (RETMKNAGVP…LIEEQIRVAM (198 aa)). K309 lines the hydrogencarbonate pocket. Positions 347 and 360 each coordinate ATP. Residues E347, E360, and N362 each coordinate Mg(2+). Mn(2+)-binding residues include E347, E360, and N362. Hydrogencarbonate contacts are provided by R364, V367, and R410. R364 is an active-site residue. Biotin is bound at residue R410.

As to quaternary structure, acetyl-CoA carboxylase is a heterohexamer composed of biotin carboxyl carrier protein, biotin carboxylase and two subunits each of ACCase subunit alpha and ACCase plastid-coded subunit beta (accD). It depends on Mg(2+) as a cofactor. Mn(2+) serves as cofactor. Accumulates in fatty acids synthesizing tissues. Mostly expressed in siliques, developing leaves, and flowers, present in roots and embryos (especially at torpedo stage), and, to a lower extent, in mature leaves.

It localises to the plastid. The protein resides in the chloroplast. It catalyses the reaction N(6)-biotinyl-L-lysyl-[protein] + hydrogencarbonate + ATP = N(6)-carboxybiotinyl-L-lysyl-[protein] + ADP + phosphate + H(+). It functions in the pathway lipid metabolism; malonyl-CoA biosynthesis; malonyl-CoA from acetyl-CoA: step 1/1. In terms of biological role, this protein is a component of the acetyl coenzyme A carboxylase complex; first, biotin carboxylase catalyzes the carboxylation of the carrier protein and then the transcarboxylase transfers the carboxyl group to form malonyl-CoA. The sequence is that of Biotin carboxylase, chloroplastic (CAC2) from Arabidopsis thaliana (Mouse-ear cress).